The chain runs to 457 residues: Cysteine--tRNA ligase (457 aa).

Cys-28 serves as a coordination point for Zn(2+). The 'HIGH' region signature appears at 30–40; it reads PTVYDTAHIGN. Residues Cys-212, His-237, and Glu-241 each coordinate Zn(2+). A 'KMSKS' region motif is present at residues 270–274; that stretch reads KMSKS. Position 273 (Lys-273) interacts with ATP.

Belongs to the class-I aminoacyl-tRNA synthetase family. In terms of assembly, monomer. Zn(2+) serves as cofactor.

It localises to the cytoplasm. The enzyme catalyses tRNA(Cys) + L-cysteine + ATP = L-cysteinyl-tRNA(Cys) + AMP + diphosphate. The protein is Cysteine--tRNA ligase of Wolbachia pipientis wMel.